The primary structure comprises 337 residues: ATP-dependent 6-phosphofructokinase (337 aa).

Glycine 11 is a binding site for ATP. 21-25 (RAVVR) lines the ADP pocket. Residues 72–73 (RY) and 102–105 (GDGS) contribute to the ATP site. Aspartate 103 is a binding site for Mg(2+). 125–127 (TID) contributes to the substrate binding site. Aspartate 127 functions as the Proton acceptor in the catalytic mechanism. Residue arginine 154 coordinates ADP. Substrate contacts are provided by residues arginine 162 and 169–171 (MGR). ADP contacts are provided by residues 185–187 (GAD) and 214–216 (KNH). Residues glutamate 223, arginine 245, and 251-254 (HILR) contribute to the substrate site.

It belongs to the phosphofructokinase type A (PFKA) family. ATP-dependent PFK group I subfamily. Prokaryotic clade 'B1' sub-subfamily. Homotetramer. Mg(2+) is required as a cofactor.

It localises to the cytoplasm. The enzyme catalyses beta-D-fructose 6-phosphate + ATP = beta-D-fructose 1,6-bisphosphate + ADP + H(+). It functions in the pathway carbohydrate degradation; glycolysis; D-glyceraldehyde 3-phosphate and glycerone phosphate from D-glucose: step 3/4. Allosterically activated by ADP and other diphosphonucleosides, and allosterically inhibited by phosphoenolpyruvate. Its function is as follows. Catalyzes the phosphorylation of D-fructose 6-phosphate to fructose 1,6-bisphosphate by ATP, the first committing step of glycolysis. This Streptococcus uberis (strain ATCC BAA-854 / 0140J) protein is ATP-dependent 6-phosphofructokinase.